Consider the following 428-residue polypeptide: MSVKWEKLEGNEGVLTVEVDAEQVNKGLDAAFKKVVKNVSLPGFRKGKVPRVLFEKRFGVEALYQDALDILLPEAYAKAVEEAGIEPVSMPEIDIEQMEKGKSLIFKAKVTVKPEVKLGQYKGLEVEKIDTTVTDEDVENKLKRLQENYAELVVKEEGTVENGDTAVIDFEGFVDGEPFEGGKAENYSLEIGSGTFIPGFEDQLVGMKAGEEKEIQVTFPEEYHAEQLAGKPATFKVKVHEVKAKQLPALDDEFAKDVDEEVETLDELKSKIRTRLEEAKKNEAEAAVRNAVVEKAAANAEIDIPAVMVQNETDRMLREFDQRLQMQGMNLQLYYQFSGQDEAALREQMKEDAEKRVRAALTLEAIAKAENIDVTDEEVNEELEKMAASYNLSVDKLKELIGNLDGVKEDLKWRKTVDFLVEHSTVAA.

One can recognise a PPIase FKBP-type domain in the interval 163-248; it reads GDTAVIDFEG…VHEVKAKQLP (86 aa).

Belongs to the FKBP-type PPIase family. Tig subfamily.

Its subcellular location is the cytoplasm. It catalyses the reaction [protein]-peptidylproline (omega=180) = [protein]-peptidylproline (omega=0). In terms of biological role, involved in protein export. Acts as a chaperone by maintaining the newly synthesized protein in an open conformation. Functions as a peptidyl-prolyl cis-trans isomerase. The polypeptide is Trigger factor (Geobacillus thermodenitrificans (strain NG80-2)).